Consider the following 220-residue polypeptide: Superoxide dismutase [Cu-Zn], chloroplastic (220 aa).

Residues Met-1 to Ala-66 constitute a chloroplast transit peptide. Cu cation contacts are provided by His-112, His-114, and His-129. Residues Cys-123 and Cys-212 are joined by a disulfide bond. Zn(2+)-binding residues include His-129, His-137, His-146, and Asp-149. Cu cation is bound at residue His-186.

This sequence belongs to the Cu-Zn superoxide dismutase family. In terms of assembly, homotetramer. Cu cation serves as cofactor. The cofactor is Zn(2+).

It is found in the plastid. Its subcellular location is the chloroplast. It catalyses the reaction 2 superoxide + 2 H(+) = H2O2 + O2. Destroys radicals which are normally produced within the cells and which are toxic to biological systems. This is Superoxide dismutase [Cu-Zn], chloroplastic (SODCP) from Solidago canadensis var. scabra (Tall goldenrod).